The chain runs to 549 residues: Neutral amino acid transporter 9 (549 aa).

A disordered region spans residues 1–27 (MDEDSKPLLGSVPTGDYYTDSLDPKQR). The Cytoplasmic portion of the chain corresponds to 1–107 (MDEDSKPLLG…GGDSPIKNPS (107 aa)). The chain crosses the membrane as a helical span at residues 108–128 (IVTIFAIWNTMMGTSILSIPW). The segment at 117-122 (TMMGTS) is important for arginine binding and amino acid transport. Ser122 serves as a coordination point for arginine. Over 129 to 134 (GIKQAG) the chain is Lumenal. Residues 135–155 (FTLGIIIIVLMGLLTLYCCYR) form a helical membrane-spanning segment. The Cytoplasmic portion of the chain corresponds to 156–186 (VLKSTKSIPYVDTSDWEFPDVCKYYFGGFGK). A helical membrane pass occupies residues 187-213 (WSSLVFSLVSLIGAMVVYWVLMSNFLF). Residues 214-271 (NTGKFIFNYVHNVNTSDAFGTNGTERVICPYPDVDPHGNSSTSLYSGSDNSTGLEFDH) are Lumenal-facing. N-linked (GlcNAc...) asparagine glycosylation is found at Asn227, Asn235, Asn252, and Asn263. The cysteines at positions 242 and 412 are disulfide-linked. A helical membrane pass occupies residues 272 to 288 (WWSKTNTIPFYLILLLL). At 289 to 297 (PLLNFRSAS) the chain is on the cytoplasmic side. A helical membrane pass occupies residues 298–322 (FFARFTFLGTISVIYLIFLVTYKAI). The Lumenal portion of the chain corresponds to 323–344 (QLGFHLEFHWFDSSMFFVPEFR). Residues 345–365 (TLFPQLSGVLTLAFFIHNCII) traverse the membrane as a helical segment. At 366–382 (TLMKNNKHQENNVRDLS) the chain is on the cytoplasmic side. The helical transmembrane segment at 383–403 (LAYLLVGLTYLYVGVLIFAAF) threads the bilayer. Over 404–425 (PSPPLSKECIEPNFLDNFPSSD) the chain is Lumenal. A helical membrane pass occupies residues 426–446 (ILVFVARTFLLFQMTTVYPLL). The CARC motif motif lies at 432–442 (RTFLLFQMTTV). The short motif at 445-451 (LLGYLVR) is the CRAC motif element. The Cytoplasmic segment spans residues 447-467 (GYLVRVQLMGQIFGNHYPGFL). A helical transmembrane segment spans residues 468–488 (HVFVLNVFVVGAGVLMARFYP). Over 489-495 (NIGSIIR) the chain is Lumenal. A helical transmembrane segment spans residues 496–516 (YSGALCGLALVFVLPSLIHMV). Residues 517–528 (SLKRRGELRWTS) lie on the Cytoplasmic side of the membrane. A helical membrane pass occupies residues 529-549 (TLFHGFLILLGVANLLGQFFM).

Belongs to the amino acid/polyamine transporter 2 family. SLC38A9 subfamily. Associated component of the Ragulator complex. Associated component of the Rag GTPases heterodimers (RRAGA and RRAGC). Glycosylated.

It localises to the lysosome membrane. The protein localises to the late endosome membrane. It carries out the reaction L-leucine(in) = L-leucine(out). The enzyme catalyses L-tyrosine(in) = L-tyrosine(out). The catalysed reaction is L-glutamine(out) = L-glutamine(in). It catalyses the reaction L-asparagine(out) = L-asparagine(in). With respect to regulation, amino acid transport activity is increased by sodium. Transport of L-glutamine, leucine and tyrosine is increased by arginine binding. Functionally, lysosomal amino acid transporter involved in the activation of mTORC1 in response to amino acid levels. Probably acts as an amino acid sensor of the Rag GTPases and Ragulator complexes, 2 complexes involved in amino acid sensing and activation of mTORC1, a signaling complex promoting cell growth in response to growth factors, energy levels, and amino acids. Following activation by amino acids, the Ragulator and Rag GTPases function as a scaffold recruiting mTORC1 to lysosomes where it is in turn activated. SLC38A9 mediates transport of amino acids with low capacity and specificity with a slight preference for polar amino acids. Acts as an arginine sensor. Following activation by arginine binding, mediates transport of L-glutamine, leucine and tyrosine with high efficiency, and is required for the efficient utilization of these amino acids after lysosomal protein degradation. However, the transport mechanism is not well defined and the role of sodium is not clear. Guanine exchange factor (GEF) that, upon arginine binding, stimulates GDP release from RRAGA and therefore activates the Rag GTPase heterodimer and the mTORC1 pathway in response to nutrient sufficiency. This is Neutral amino acid transporter 9 from Danio rerio (Zebrafish).